The chain runs to 82 residues: RNA-binding protein Hfq (82 aa).

A Sm domain is found at 11-71; sequence DTFLNHVRKT…ISTIMPGAPI (61 aa).

It belongs to the Hfq family. As to quaternary structure, homohexamer.

Functionally, RNA chaperone that binds small regulatory RNA (sRNAs) and mRNAs to facilitate mRNA translational regulation in response to envelope stress, environmental stress and changes in metabolite concentrations. Also binds with high specificity to tRNAs. The chain is RNA-binding protein Hfq from Rhodopseudomonas palustris (strain HaA2).